A 413-amino-acid chain; its full sequence is Protein arginine N-methyltransferase 2 (413 aa).

Disordered stretches follow at residues 65–85 and 148–178; these read DDEE…QKSV and ELED…SAPQ. Acidic residues predominate over residues 148-173; it reads ELEDDDEEEEEGQEEQTGTEEVEVEG. One can recognise an RMT2 domain in the interval 192–413; that stretch reads TGPDVTNSRY…YRLPLCKYMD (222 aa). Residues tyrosine 201, methionine 230, 250-255, 271-273, 298-299, and aspartate 318 contribute to the S-adenosyl-L-methionine site; these read HGMGIV, EAH, and WQ.

Belongs to the class I-like SAM-binding methyltransferase superfamily. RMT2 methyltransferase family. In terms of assembly, monomer.

It localises to the cytoplasm. Its subcellular location is the nucleus. Its function is as follows. S-adenosyl-L-methionine-dependent protein-arginine N-methyltransferase that methylates the delta-nitrogen atom of arginine residues to form N5-methylarginine (type IV) in target proteins. Monomethylates ribosomal protein L12. In Aspergillus oryzae (strain ATCC 42149 / RIB 40) (Yellow koji mold), this protein is Protein arginine N-methyltransferase 2.